The following is a 533-amino-acid chain: (E)-beta-farnesene synthase (533 aa).

5 residues coordinate Mg(2+): aspartate 286, aspartate 290, asparagine 430, serine 434, and glutamate 438. The DDXXD motif signature appears at 286-290; it reads DDMMD.

The protein belongs to the terpene synthase family. Requires Mg(2+) as cofactor. Co(2+) is required as a cofactor. It depends on Mn(2+) as a cofactor.

The protein localises to the cytoplasm. It catalyses the reaction (2E,6E)-farnesyl diphosphate = (E)-beta-farnesene + diphosphate. The protein operates within secondary metabolite biosynthesis; terpenoid biosynthesis. Functionally, sesquiterpene cyclase catalyzing the production of sixfold more beta-farnesene than alpha-bergamotene from farnesyl diphosphate. Involved in indirect defense by producing volatile signals attracting natural enemies of herbivores. The chain is (E)-beta-farnesene synthase from Zea perennis (Perennial teosinte).